A 130-amino-acid chain; its full sequence is Small ribosomal subunit protein uS11c (130 aa).

It belongs to the universal ribosomal protein uS11 family. In terms of assembly, part of the 30S ribosomal subunit.

Its subcellular location is the plastid. The protein localises to the chloroplast. The polypeptide is Small ribosomal subunit protein uS11c (Chlorokybus atmophyticus (Soil alga)).